Here is a 326-residue protein sequence, read N- to C-terminus: E3 ubiquitin-protein ligase SINAT3 (326 aa).

The disordered stretch occupies residues Met-1–Asn-44. The RING-type zinc-finger motif lies at Cys-63 to Arg-99. The SBD stretch occupies residues Val-113 to Arg-306. An SIAH-type zinc finger spans residues Ser-116 to Lys-176. Zn(2+)-binding residues include Cys-121, Cys-128, His-140, Cys-144, Cys-151, Cys-158, His-170, and His-175.

The protein belongs to the SINA (Seven in absentia) family. In terms of assembly, interacts with SINAT6. Interacts with WAV3. Interacts with FREE1. Interacts with ELC/VPS23A.

The protein localises to the endosome. It localises to the multivesicular body. It is found in the cytoplasmic vesicle. The protein resides in the autophagosome. It catalyses the reaction S-ubiquitinyl-[E2 ubiquitin-conjugating enzyme]-L-cysteine + [acceptor protein]-L-lysine = [E2 ubiquitin-conjugating enzyme]-L-cysteine + N(6)-ubiquitinyl-[acceptor protein]-L-lysine.. It functions in the pathway protein modification; protein ubiquitination. Its function is as follows. E3 ubiquitin-protein ligase that mediates ubiquitination and subsequent proteasomal degradation of target proteins. E3 ubiquitin ligases accept ubiquitin from an E2 ubiquitin-conjugating enzyme in the form of a thioester and then directly transfers the ubiquitin to targeted substrates. It probably triggers the ubiquitin-mediated degradation of different substrates. Modulates directly the ubiquitination and proteasomal-dependent degradation of FREE1, a component of the ESCRT-I complex. Modulates directly the ubiquitination and proteasomal-dependent degradation of ELC/VPS23A, a component of the ESCRT-I complex. This is E3 ubiquitin-protein ligase SINAT3 from Arabidopsis thaliana (Mouse-ear cress).